The following is a 953-amino-acid chain: Ubiquitin carboxyl-terminal hydrolase CYLD (953 aa).

Positions 106 to 590 (CEERLSLFRN…LEIMIGKKKG (485 aa)) are interaction with TRIP. 2 consecutive CAP-Gly domains span residues 153–198 (LAER…VFVA) and 253–286 (DVLP…VQLC). Positions 318 to 350 (FMSRGVGDKGSSSHNKPKVTGSTSDPGSRNRSE) are disordered. A compositionally biased stretch (polar residues) spans 327–346 (GSSSHNKPKVTGSTSDPGSR). The residue at position 384 (Ser-384) is a Phosphoserine. Residues 387–410 (EMSSDFGHSSPPPQPPSMNSLSSE) form a disordered region. The interaction with TRAF2 stretch occupies residues 391–466 (DFGHSSPPPQ…MPSSSGNAHG (76 aa)). Phosphoserine is present on residues Ser-415 and Ser-419. Residues 467 to 681 (LEVGSLAEVK…FTSEEKDPEE (215 aa)) are interaction with IKBKG/NEMO. The region spanning 489–532 (GQPPGLSDVLAGLELEDECAGCTDGTFRGTRYFTCALKKALFVK) is the CAP-Gly 3 domain. The USP domain maps to 589–947 (KGIQGHYNSC…DAYMCMYQSP (359 aa)). Cys-598 acts as the Nucleophile in catalysis. The interval 778 to 830 (LEDTPRQCRICGGLAMYECRECYDDPDISAGKIKQFCKTCSTQVHLHPRRLNH) is B-box. Zn(2+)-binding residues include Cys-785, Cys-788, Cys-796, Cys-799, Cys-814, Cys-817, His-822, and His-830. Catalysis depends on His-868, which acts as the Proton acceptor.

The protein belongs to the peptidase C19 family. Interacts (via CAP-Gly domain) with IKBKG/NEMO (via proline-rich C-terminal region). Interacts with TRAF2 and TRIP. Interacts with PLK1, DVL1, DVL3, MAVS, TBK1, IKKE and RIGI. Interacts (via CAP-Gly domain) with microtubules. Interacts with HDAC6 and BCL3. Interacts with MAP3K7. Identified in a complex with TRAF6 and SQSTM1. Interacts with OPTN and SQSTM1. Interacts with CEP350. Interacts with RNF31; the interaction is indirect and is mediated via SPATA2. Interacts with SPATA2 (via the PUB domain); the interaction is direct and recruits CYLD to the LUBAC complex, thereby regulating TNF-alpha-induced necroptosis. Post-translationally, phosphorylated on several serine residues by IKKA and/or IKKB in response to immune stimuli. Phosphorylation requires IKBKG. Phosphorylation abolishes TRAF2 deubiquitination, interferes with the activation of Jun kinases, and strongly reduces CD40-dependent gene activation by NF-kappa-B. Ubiquitinated. Polyubiquitinated in hepatocytes treated with palmitic acid. Ubiquitination is mediated by E3 ligase TRIM47 and leads to proteasomal degradation.

The protein localises to the cytoplasm. It is found in the perinuclear region. It localises to the cytoskeleton. The protein resides in the cell membrane. Its subcellular location is the microtubule organizing center. The protein localises to the centrosome. It is found in the spindle. It localises to the cilium basal body. It carries out the reaction Thiol-dependent hydrolysis of ester, thioester, amide, peptide and isopeptide bonds formed by the C-terminal Gly of ubiquitin (a 76-residue protein attached to proteins as an intracellular targeting signal).. Functionally, deubiquitinase that specifically cleaves 'Lys-63'- and linear 'Met-1'-linked polyubiquitin chains and is involved in NF-kappa-B activation and TNF-alpha-induced necroptosis. Negatively regulates NF-kappa-B activation by deubiquitinating upstream signaling factors. Contributes to the regulation of cell survival, proliferation and differentiation via its effects on NF-kappa-B activation. Negative regulator of Wnt signaling. Inhibits HDAC6 and thereby promotes acetylation of alpha-tubulin and stabilization of microtubules. Plays a role in the regulation of microtubule dynamics, and thereby contributes to the regulation of cell proliferation, cell polarization, cell migration, and angiogenesis. Required for normal cell cycle progress and normal cytokinesis. Inhibits nuclear translocation of NF-kappa-B. Plays a role in the regulation of inflammation and the innate immune response, via its effects on NF-kappa-B activation. Dispensable for the maturation of intrathymic natural killer cells, but required for the continued survival of immature natural killer cells. Negatively regulates TNFRSF11A signaling and osteoclastogenesis. Involved in the regulation of ciliogenesis, allowing ciliary basal bodies to migrate and dock to the plasma membrane; this process does not depend on NF-kappa-B activation. Ability to remove linear ('Met-1'-linked) polyubiquitin chains regulates innate immunity and TNF-alpha-induced necroptosis: recruited to the LUBAC complex via interaction with SPATA2 and restricts linear polyubiquitin formation on target proteins. Regulates innate immunity by restricting linear polyubiquitin formation on RIPK2 in response to NOD2 stimulation. Involved in TNF-alpha-induced necroptosis by removing linear ('Met-1'-linked) polyubiquitin chains from RIPK1, thereby regulating the kinase activity of RIPK1. Negatively regulates intestinal inflammation by removing 'Lys-63' linked polyubiquitin chain of NLRP6, thereby reducing the interaction between NLRP6 and PYCARD/ASC and formation of the NLRP6 inflammasome. Does not catalyze deubiquitination of heterotypic 'Lys-63'-/'Lys-48'-linked branched ubiquitin chains. Removes 'Lys-63' linked polyubiquitin chain of MAP3K7, which inhibits phosphorylation and blocks downstream activation of the JNK-p38 kinase cascades. Also removes 'Lys-63'-linked polyubiquitin chains of MAP3K1 and MA3P3K3, which inhibit their interaction with MAP2K1 and MAP2K2. The polypeptide is Ubiquitin carboxyl-terminal hydrolase CYLD (Cyld) (Rattus norvegicus (Rat)).